The sequence spans 397 residues: Putative 3'(2'),5'-bisphosphate nucleotidase, mitochondrial (397 aa).

Residues 1-16 (MYILDTGARFSAVRFS) constitute a mitochondrion transit peptide. The active-site Proton acceptor is the aspartate 91. Positions 114, 174, 176, and 177 each coordinate Mg(2+). The active-site Proton acceptor is the threonine 179. Positions 179, 305, 308, and 334 each coordinate adenosine 3',5'-bisphosphate. Serine 305, lysine 308, and aspartate 334 together coordinate AMP. Aspartate 334 is a Mg(2+) binding site.

Belongs to the inositol monophosphatase superfamily. Mg(2+) is required as a cofactor.

It is found in the mitochondrion. The enzyme catalyses 3'-phosphoadenylyl sulfate + H2O = adenosine 5'-phosphosulfate + phosphate. It catalyses the reaction adenosine 3',5'-bisphosphate + H2O = AMP + phosphate. It carries out the reaction adenosine 2',5'-bisphosphate + H2O = AMP + phosphate. Phosphatase that converts adenosine 3'-phosphate 5'-phosphosulfate (PAPS) to adenosine 5'-phosphosulfate (APS) and 3'(2')-phosphoadenosine 5'-phosphate (PAP) to AMP. The protein is Putative 3'(2'),5'-bisphosphate nucleotidase, mitochondrial of Arabidopsis thaliana (Mouse-ear cress).